Consider the following 474-residue polypeptide: Cytochrome c biogenesis protein CcsB (474 aa).

The next 3 helical transmembrane spans lie at 36–56, 96–116, and 182–202; these read LKLA…GTVI, SWWF…CTFR, and VGPI…MIGA.

Belongs to the Ccs1/CcsB family. As to quaternary structure, may interact with CcsA.

The protein resides in the cell inner membrane. In terms of biological role, required during biogenesis of c-type cytochromes (cytochrome c6 and cytochrome f) at the step of heme attachment. This is Cytochrome c biogenesis protein CcsB from Gloeobacter violaceus (strain ATCC 29082 / PCC 7421).